Reading from the N-terminus, the 156-residue chain is MPRKGPAPKRPVIIDPVYGSPLVTSLINKVLLNGKRSTAERIVYGAMEGLREKTGNDPVITLKRALENIKPTLEVKSRRVGGATYQVPIEVKPGRANTLALRWLVGYSRARREKTMTERLLNELLDASNGLGAAVKKREDTHKMAESNKAFAHYRW.

The protein belongs to the universal ribosomal protein uS7 family. In terms of assembly, part of the 30S ribosomal subunit. Contacts proteins S9 and S11.

Its function is as follows. One of the primary rRNA binding proteins, it binds directly to 16S rRNA where it nucleates assembly of the head domain of the 30S subunit. Is located at the subunit interface close to the decoding center, probably blocks exit of the E-site tRNA. This is Small ribosomal subunit protein uS7 (rspG) from Streptomyces coelicolor (strain ATCC BAA-471 / A3(2) / M145).